The chain runs to 412 residues: Inositol polyphosphate-5-phosphatase A (412 aa).

C409 carries S-farnesyl cysteine lipidation. Positions 410–412 (VVQ) are cleaved as a propeptide — removed in mature form.

It belongs to the inositol 1,4,5-trisphosphate 5-phosphatase type I family. As to quaternary structure, interacts with TASOR. In terms of processing, isoprenylation at Cys-409 is required for localization at the membrane. Expressed at high levels in cerebellar Purkinje cells (at protein level). Expressed in Sertoli cells of the testis.

The protein resides in the cell membrane. It localises to the cell projection. Its subcellular location is the dendrite. It catalyses the reaction 1D-myo-inositol 1,4,5-trisphosphate + H2O = 1D-myo-inositol 1,4-bisphosphate + phosphate. It carries out the reaction 1D-myo-inositol 1,3,4,5-tetrakisphosphate + H2O = 1D-myo-inositol 1,3,4-trisphosphate + phosphate. In terms of biological role, phosphatase that specifically hydrolyzes the 5-phosphate of inositol 1,4,5-trisphosphate to inositol 1,4-bisphosphate, and inositol 1,3,4,5-tetrasphosphate to inositol 1,3,4-trisphosphate. Plays a crucial role in the survival of cerebellar Purkinje cells. In Mus musculus (Mouse), this protein is Inositol polyphosphate-5-phosphatase A (Inpp5a).